A 318-amino-acid chain; its full sequence is NADH-ubiquinone oxidoreductase chain 1 (318 aa).

8 consecutive transmembrane segments (helical) span residues 3 to 23 (FMNL…LTLL), 69 to 89 (VLFI…WIPL), 102 to 122 (ILFM…SGWA), 146 to 166 (LAII…STLI), 171 to 191 (HIWL…STLA), 222 to 242 (LFFL…IILF), 253 to 273 (ELYT…FLWV), and 294 to 314 (LPLT…LAGI).

The protein belongs to the complex I subunit 1 family. In terms of assembly, core subunit of respiratory chain NADH dehydrogenase (Complex I) which is composed of 45 different subunits.

The protein localises to the mitochondrion inner membrane. It catalyses the reaction a ubiquinone + NADH + 5 H(+)(in) = a ubiquinol + NAD(+) + 4 H(+)(out). Its function is as follows. Core subunit of the mitochondrial membrane respiratory chain NADH dehydrogenase (Complex I) which catalyzes electron transfer from NADH through the respiratory chain, using ubiquinone as an electron acceptor. Essential for the catalytic activity and assembly of complex I. This chain is NADH-ubiquinone oxidoreductase chain 1 (MT-ND1), found in Cnephaeus nilssonii (Northern bat).